The primary structure comprises 468 residues: N-acyl-phosphatidylethanolamine-hydrolyzing phospholipase D, mitochondrial (468 aa).

The N-terminal 39 residues, 1–39 (MNFVTCHVQMRLLLQRRLVRLRESELFRPQTSLSTFKRH), are a transit peptide targeting the mitochondrion. The helical transmembrane segment at 54-76 (YARILLLSVLVPYTGYAFYVSLA) threads the bilayer. Zn(2+) is bound by residues His-265, His-267, Asp-269, His-270, His-332, and His-425.

Belongs to the NAPE-PLD family. Zn(2+) serves as cofactor.

Its subcellular location is the mitochondrion membrane. It carries out the reaction an N-acyl-1,2-diacyl-sn-glycero-3-phosphoethanolamine + H2O = an N-acylethanolamine + a 1,2-diacyl-sn-glycero-3-phosphate + H(+). Functionally, hydrolyzes N-acyl-phosphatidylethanolamines (NAPEs) to produce N-acylethanolamines (NAEs). The chain is N-acyl-phosphatidylethanolamine-hydrolyzing phospholipase D, mitochondrial (FMP30) from Saccharomyces cerevisiae (strain ATCC 204508 / S288c) (Baker's yeast).